A 150-amino-acid chain; its full sequence is Transcriptional regulator MraZ (150 aa).

2 SpoVT-AbrB domains span residues 9–54 (QSIH…PPEE) and 83–126 (AEEC…NKST).

It belongs to the MraZ family. Forms oligomers.

The protein localises to the cytoplasm. The protein resides in the nucleoid. This is Transcriptional regulator MraZ from Syntrophobacter fumaroxidans (strain DSM 10017 / MPOB).